Consider the following 137-residue polypeptide: Nucleoside diphosphate kinase (137 aa).

Residues K9, F57, R85, T91, R102, and N112 each coordinate ATP. H115 acts as the Pros-phosphohistidine intermediate in catalysis.

It belongs to the NDK family. As to quaternary structure, homotetramer. The cofactor is Mg(2+).

The protein localises to the cytoplasm. The catalysed reaction is a 2'-deoxyribonucleoside 5'-diphosphate + ATP = a 2'-deoxyribonucleoside 5'-triphosphate + ADP. The enzyme catalyses a ribonucleoside 5'-diphosphate + ATP = a ribonucleoside 5'-triphosphate + ADP. In terms of biological role, major role in the synthesis of nucleoside triphosphates other than ATP. The ATP gamma phosphate is transferred to the NDP beta phosphate via a ping-pong mechanism, using a phosphorylated active-site intermediate. This is Nucleoside diphosphate kinase from Pelobacter propionicus (strain DSM 2379 / NBRC 103807 / OttBd1).